The chain runs to 563 residues: Arginine--tRNA ligase (563 aa).

The short motif at 122-132 (PNIAKPMSMGH) is the 'HIGH' region element.

The protein belongs to the class-I aminoacyl-tRNA synthetase family. Monomer.

Its subcellular location is the cytoplasm. The catalysed reaction is tRNA(Arg) + L-arginine + ATP = L-arginyl-tRNA(Arg) + AMP + diphosphate. The chain is Arginine--tRNA ligase from Ligilactobacillus salivarius (strain UCC118) (Lactobacillus salivarius).